Reading from the N-terminus, the 399-residue chain is Chorismate synthase (399 aa).

NADP(+)-binding residues include R40 and R46. FMN contacts are provided by residues 135 to 137 (RAS), 256 to 257 (QA), G301, 316 to 320 (KPIAT), and R342.

It belongs to the chorismate synthase family. In terms of assembly, homotetramer. Requires FMNH2 as cofactor.

It carries out the reaction 5-O-(1-carboxyvinyl)-3-phosphoshikimate = chorismate + phosphate. It functions in the pathway metabolic intermediate biosynthesis; chorismate biosynthesis; chorismate from D-erythrose 4-phosphate and phosphoenolpyruvate: step 7/7. Functionally, catalyzes the anti-1,4-elimination of the C-3 phosphate and the C-6 proR hydrogen from 5-enolpyruvylshikimate-3-phosphate (EPSP) to yield chorismate, which is the branch point compound that serves as the starting substrate for the three terminal pathways of aromatic amino acid biosynthesis. This reaction introduces a second double bond into the aromatic ring system. This chain is Chorismate synthase, found in Paenarthrobacter aurescens (strain TC1).